Here is a 420-residue protein sequence, read N- to C-terminus: 20-oxo-5-O-mycaminosyltylactone 23-monooxygenase (420 aa).

Residues 1–28 form a disordered region; that stretch reads MSSSGDARPSQKGILLPAARANDTDEAA. Positions 118, 122, 311, 367, and 369 each coordinate heme.

The protein belongs to the cytochrome P450 family.

It carries out the reaction 20-oxo-5-O-beta-D-mycaminosyltylonolide + 2 reduced [2Fe-2S]-[ferredoxin] + O2 + 2 H(+) = 5-O-beta-D-mycaminosyltylonolide + 2 oxidized [2Fe-2S]-[ferredoxin] + H2O. Its pathway is antibiotic biosynthesis; tylosin biosynthesis. In terms of biological role, involved in the biosynthesis of the complex macrolide antibiotic tylosin. Catalyzes the hydroxylation of 20-oxo-5-O-beta-mycaminosyltylactone at the C-23 position to yield 5-O-beta-mycaminosyltylonolide. The protein is 20-oxo-5-O-mycaminosyltylactone 23-monooxygenase of Streptomyces fradiae (Streptomyces roseoflavus).